A 733-amino-acid polypeptide reads, in one-letter code: Phosphoribosylformylglycinamidine synthase subunit PurL (733 aa).

Histidine 41 is an active-site residue. Tyrosine 44 and lysine 83 together coordinate ATP. Mg(2+) is bound at residue glutamate 85. Substrate-binding positions include serine 86–histidine 89 and arginine 108. Histidine 87 serves as the catalytic Proton acceptor. Mg(2+) is bound at residue aspartate 109. Residues glycine 212–glutamine 232 are disordered. Glutamine 232 lines the substrate pocket. Residue aspartate 260 participates in Mg(2+) binding. Glutamate 304–glutamine 306 contributes to the substrate binding site. Aspartate 488 and glycine 525 together coordinate ATP. Asparagine 526 serves as a coordination point for Mg(2+). Serine 528 is a binding site for substrate.

The protein belongs to the FGAMS family. In terms of assembly, monomer. Part of the FGAM synthase complex composed of 1 PurL, 1 PurQ and 2 PurS subunits.

It is found in the cytoplasm. It catalyses the reaction N(2)-formyl-N(1)-(5-phospho-beta-D-ribosyl)glycinamide + L-glutamine + ATP + H2O = 2-formamido-N(1)-(5-O-phospho-beta-D-ribosyl)acetamidine + L-glutamate + ADP + phosphate + H(+). Its pathway is purine metabolism; IMP biosynthesis via de novo pathway; 5-amino-1-(5-phospho-D-ribosyl)imidazole from N(2)-formyl-N(1)-(5-phospho-D-ribosyl)glycinamide: step 1/2. Functionally, part of the phosphoribosylformylglycinamidine synthase complex involved in the purines biosynthetic pathway. Catalyzes the ATP-dependent conversion of formylglycinamide ribonucleotide (FGAR) and glutamine to yield formylglycinamidine ribonucleotide (FGAM) and glutamate. The FGAM synthase complex is composed of three subunits. PurQ produces an ammonia molecule by converting glutamine to glutamate. PurL transfers the ammonia molecule to FGAR to form FGAM in an ATP-dependent manner. PurS interacts with PurQ and PurL and is thought to assist in the transfer of the ammonia molecule from PurQ to PurL. This is Phosphoribosylformylglycinamidine synthase subunit PurL from Thermoanaerobacter sp. (strain X514).